The following is a 273-amino-acid chain: Formamidopyrimidine-DNA glycosylase (273 aa).

The active-site Schiff-base intermediate with DNA is the Pro-2. The active-site Proton donor is the Glu-3. The active-site Proton donor; for beta-elimination activity is the Lys-59. Positions 92 and 111 each coordinate DNA. The FPG-type zinc-finger motif lies at 239 to 273; it reads KVYGKTGEPCVICGTPIEKIKLNGRGTHFCPHCQK. The Proton donor; for delta-elimination activity role is filled by Arg-263.

This sequence belongs to the FPG family. Monomer. Requires Zn(2+) as cofactor.

It catalyses the reaction Hydrolysis of DNA containing ring-opened 7-methylguanine residues, releasing 2,6-diamino-4-hydroxy-5-(N-methyl)formamidopyrimidine.. It carries out the reaction 2'-deoxyribonucleotide-(2'-deoxyribose 5'-phosphate)-2'-deoxyribonucleotide-DNA = a 3'-end 2'-deoxyribonucleotide-(2,3-dehydro-2,3-deoxyribose 5'-phosphate)-DNA + a 5'-end 5'-phospho-2'-deoxyribonucleoside-DNA + H(+). Involved in base excision repair of DNA damaged by oxidation or by mutagenic agents. Acts as a DNA glycosylase that recognizes and removes damaged bases. Has a preference for oxidized purines, such as 7,8-dihydro-8-oxoguanine (8-oxoG). Has AP (apurinic/apyrimidinic) lyase activity and introduces nicks in the DNA strand. Cleaves the DNA backbone by beta-delta elimination to generate a single-strand break at the site of the removed base with both 3'- and 5'-phosphates. The sequence is that of Formamidopyrimidine-DNA glycosylase from Listeria innocua serovar 6a (strain ATCC BAA-680 / CLIP 11262).